The sequence spans 310 residues: Olfactory receptor 2A14 (310 aa).

Over 1 to 24 (MEGNKTWITDITLPRFQVGPALEI) the chain is Extracellular. N4 is a glycosylation site (N-linked (GlcNAc...) asparagine). A helical membrane pass occupies residues 25-48 (LLCGLFSAFYTLTLLGNGVIFGII). Residues 49 to 56 (CLDCKLHT) are Cytoplasmic-facing. A helical membrane pass occupies residues 57–78 (PMYFFLSHLAIVDISYASNYVP). The Extracellular portion of the chain corresponds to 79 to 99 (KMLTNLMNQESTISFFPCIMQ). A disulfide bridge connects residues C96 and C188. The chain crosses the membrane as a helical span at residues 100–119 (TFLYLAFAHVECLILVVMSY). Residues 120 to 138 (DRYADICHPLRYNSLMSWR) are Cytoplasmic-facing. The chain crosses the membrane as a helical span at residues 139–157 (VCTVLAVASWVFSFLLALV). Residues 158–194 (PLVLILSLPFCGPHEINHFFCEILSVLKLACADTWLN) are Extracellular-facing. The helical transmembrane segment at 195-218 (QVVIFAACVFILVGPLCLVLVSYL) threads the bilayer. Over 219–235 (RILAAILRIQSGEGRRK) the chain is Cytoplasmic. The helical transmembrane segment at 236 to 258 (AFSTCSSHLCVVGLFFGSAIVTY) threads the bilayer. The Extracellular portion of the chain corresponds to 259 to 271 (MAPKSRHPEEQQK). A helical membrane pass occupies residues 272–291 (VLSLFYSLFNPMLNPLIYSL). Residues 292–310 (RNAEVKGALRRALRKERLT) lie on the Cytoplasmic side of the membrane.

The protein belongs to the G-protein coupled receptor 1 family.

The protein localises to the cell membrane. Its function is as follows. Odorant receptor. The protein is Olfactory receptor 2A14 (OR2A14) of Homo sapiens (Human).